Reading from the N-terminus, the 835-residue chain is Ribonuclease R (835 aa).

The RNB domain occupies 267-593; it reads RVDLRELPLV…LLHRAIKYLI (327 aa). An S1 motif domain is found at 652 to 733; the sequence is GDELEGVIAN…DDKQIDFELV (82 aa). Basic and acidic residues predominate over residues 739–754; it reads LRGEGKTAKKRAAEAK. The disordered stretch occupies residues 739 to 835; sequence LRGEGKTAKK…KTKRTKQDAQ (97 aa). Residues 755-764 are compositionally biased toward basic residues; it reads RKAKEKKRAA. The segment covering 765 to 777 has biased composition (low complexity); it reads TRSSSKESATARA. A compositionally biased stretch (basic and acidic residues) spans 783 to 793; sequence PTKRPEQTDSG. A compositionally biased stretch (basic residues) spans 809 to 829; sequence KPKVKKAHKKKPHSKPKKTKR.

It belongs to the RNR ribonuclease family. RNase R subfamily.

The protein resides in the cytoplasm. It catalyses the reaction Exonucleolytic cleavage in the 3'- to 5'-direction to yield nucleoside 5'-phosphates.. In terms of biological role, 3'-5' exoribonuclease that releases 5'-nucleoside monophosphates and is involved in maturation of structured RNAs. The chain is Ribonuclease R from Vibrio parahaemolyticus serotype O3:K6 (strain RIMD 2210633).